Consider the following 102-residue polypeptide: P antigen family member 4 (102 aa).

Basic residues predominate over residues 1-10 (MSARVRSRSR). Residues 1-102 (MSARVRSRSR…KTKEAGDGQP (102 aa)) are disordered. The residue at position 7 (S7) is a Phosphoserine; by CLK2. Residue S9 is modified to Phosphoserine; by HIPK1 and CLK2. The segment covering 45–85 (GQEREGTPPIEERKVEGDCQEMDLEKTRSERGDGSDVKEKT) has biased composition (basic and acidic residues). At T51 the chain carries Phosphothreonine; by HIPK1 and CLK2. T71 is modified (phosphothreonine; by CLK2). Phosphoserine; by CLK2 occurs at positions 73 and 79. Residues T85 and T94 each carry the phosphothreonine; by CLK2 modification.

This sequence belongs to the GAGE family. Interacts with JUN. Post-translationally, HIPK1-mediated phosphorylation at Thr-51 leads to the compaction of its intrinsically disordered conformation and is critical for its ability to potentiate the transcriptional activator activity of JUN inspite of a reduced interaction with JUN. CLK2-mediated phosphorylation at multiple Ser and Thr residues attenuates its ability to potentiate JUN transcriptional activator activity. In terms of tissue distribution, expressed at basal lvels in the adult normal prostate gland but is highly up-regulated in the fetal prostate and prostate cancer cells. Preferentially expressed in normal male and female reproductive tissues, testis, fallopian tube, uterus, and placenta, as well as in testicular cancer, uterine cancer, cervical cancer and kidney cancer.

The protein localises to the cytoplasm. It localises to the nucleus. The protein resides in the mitochondrion. Functionally, intrinsically disordered protein that potentiates the transcriptional activator activity of JUN. Protects cells from stress-induced apoptosis by inhibiting reactive oxygen species (ROS) production and via regulation of the MAPK signaling pathway. This chain is P antigen family member 4 (PAGE4), found in Homo sapiens (Human).